A 66-amino-acid polypeptide reads, in one-letter code: Phylloseptin-Az2 (66 aa).

Residues 1–22 form the signal peptide; the sequence is MAFLKKSLFLVLFLGLVSLSIC. A propeptide spanning residues 23-44 is cleaved from the precursor; the sequence is EEEKRETEEKENEQEDDDKSEE. The tract at residues 24-45 is disordered; sequence EEKRETEEKENEQEDDDKSEEK. The span at 31–41 shows a compositional bias: acidic residues; sequence EKENEQEDDDK. Position 65 is a phenylalanine amide (Phe-65).

Expressed by the skin glands.

Its subcellular location is the secreted. Functionally, has antibacterial activity against the Gram-negative bacteria E.coli ATCC 11775 (MIC=7.2 uM), and the Gram-positive bacteria S.aureus ATCC 12600 (MIC=3.6 uM) and M.luteus ATCC 49732 (MIC=1.8 uM). Does not inhibit the growth of the fungus C.albicans. The polypeptide is Phylloseptin-Az2 (Pithecopus azureus (Orange-legged monkey tree frog)).